The following is a 258-amino-acid chain: Tryptophan synthase alpha chain (258 aa).

Residues Glu-46 and Asp-57 each act as proton acceptor in the active site.

Belongs to the TrpA family. Tetramer of two alpha and two beta chains.

The enzyme catalyses (1S,2R)-1-C-(indol-3-yl)glycerol 3-phosphate + L-serine = D-glyceraldehyde 3-phosphate + L-tryptophan + H2O. Its pathway is amino-acid biosynthesis; L-tryptophan biosynthesis; L-tryptophan from chorismate: step 5/5. In terms of biological role, the alpha subunit is responsible for the aldol cleavage of indoleglycerol phosphate to indole and glyceraldehyde 3-phosphate. The polypeptide is Tryptophan synthase alpha chain (Phocaeicola vulgatus (strain ATCC 8482 / DSM 1447 / JCM 5826 / CCUG 4940 / NBRC 14291 / NCTC 11154) (Bacteroides vulgatus)).